A 492-amino-acid chain; its full sequence is N-succinylglutamate 5-semialdehyde dehydrogenase (492 aa).

Residue 220 to 225 (GSASTG) participates in NAD(+) binding. Residues Glu-243 and Cys-277 contribute to the active site.

The protein belongs to the aldehyde dehydrogenase family. AstD subfamily.

It carries out the reaction N-succinyl-L-glutamate 5-semialdehyde + NAD(+) + H2O = N-succinyl-L-glutamate + NADH + 2 H(+). Its pathway is amino-acid degradation; L-arginine degradation via AST pathway; L-glutamate and succinate from L-arginine: step 4/5. Catalyzes the NAD-dependent reduction of succinylglutamate semialdehyde into succinylglutamate. The chain is N-succinylglutamate 5-semialdehyde dehydrogenase from Salmonella dublin (strain CT_02021853).